The primary structure comprises 328 residues: C-type lectin domain family 11 member A (328 aa).

A signal peptide spans 1–21; the sequence is MQAAWLLGALLVPHLLSFGHG. Residues 58–111 are disordered; sequence PTGVGNKDNLAENSEGKEVWEATETQGEEEEEETTTTPSSSPTPFPSPSPTSED. The region spanning 188 to 325 is the C-type lectin domain; that stretch reads LGHKCFLLSR…CERRLYFVCE (138 aa). Cystine bridges form between Cys209–Cys324 and Cys301–Cys316.

Post-translationally, O-glycosylated. Probably sulfated on the O-glycans.

The protein resides in the cytoplasm. Its subcellular location is the secreted. In terms of biological role, promotes osteogenesis by stimulating the differentiation of mesenchymal progenitors into mature osteoblasts. Important for repair and maintenance of adult bone. The sequence is that of C-type lectin domain family 11 member A (Clec11a) from Rattus norvegicus (Rat).